Consider the following 786-residue polypeptide: Rho GTPase-activating protein 10 (786 aa).

The region spanning 7–262 (EFSDCYLDSP…IRQNPKDHKR (256 aa)) is the BAR domain. The 108-residue stretch at 265 to 372 (QFTAEGYLYV…WLEALGGKEA (108 aa)) folds into the PH domain. Residues 389–574 (AQLDKMGFTI…ILIENHEKIF (186 aa)) form the Rho-GAP domain. Disordered stretches follow at residues 576–608 (TPPDTTFPEPTCLSASPPNAPPRQSKRQGQRTK) and 621–727 (EDGD…PPES). Positions 599 to 608 (QSKRQGQRTK) are enriched in basic residues. The span at 634-651 (PTSSLDSLSSPSPVTTAV) shows a compositional bias: low complexity. Residues 676 to 688 (IPGQTRSSMVQWL) show a composition bias toward polar residues. Over residues 689–712 (NPQSPTTTSSNSAVTPLSPGSSPF) the composition is skewed to low complexity. The region spanning 728-786 (IRSRKARAVYPCEAEHSSELSFEIGAIFEDVQTSREPGWLEGTLNGKRGLIPQNYVKLL) is the SH3 domain.

In terms of assembly, interacts with PKN3. Interacts with caspase-activated PAK2 proteolytic fragment PAK-2p34; the interaction does not affect GRAF2/ARHGAP10 GTPase activation activity towards RHOA and CDC42. Interacts via its SH3 domain with PTK2/FAK1. Interacts with PTK2B/PYK2; the interaction negatively regulates GRAF2/ARHGAP10 GTPase-activating activity. Interacts with MICAL1 and WDR44; complex formation might transit from GRAF2/ARHGAP10-MICAL1 to GRAF2/ARHGAP10-WDR44 complexes. Phosphorylated. Phosphorylated in vitro by constitutive active PKN3. As to expression, high levels of expression in heart and skeletal muscle.

It localises to the cytoplasm. It is found in the perinuclear region. Its subcellular location is the cell membrane. The protein resides in the endosome membrane. Its function is as follows. GTPase-activating protein that catalyzes the conversion of active GTP-bound Rho GTPases to their inactive GDP-bound form, thus suppressing various Rho GTPase-mediated cellular processes. Also converts Cdc42 to an inactive GDP-bound state. Essential for PTKB2 regulation of cytoskeletal organization via Rho family GTPases. Inhibits PAK2 proteolytic fragment PAK-2p34 kinase activity and changes its localization from the nucleus to the perinuclear region. Stabilizes PAK-2p34 thereby increasing stimulation of cell death. Associates with MICAL1 on the endosomal membrane to promote Rab8-Rab10-dependent tubule extension. After dissociation with MICAL1, recruits WDR44 which connects the endoplasmic reticulum (ER) with the endosomal tubule, thereby participating in the export of a subset of neosynthesized proteins. This is Rho GTPase-activating protein 10 (ARHGAP10) from Homo sapiens (Human).